The primary structure comprises 183 residues: MSRIGKKPVKIPAGVEVNIEGNTVTVKGPKGKLTRQFPAEITISREGEELQVSRPSDAKPHRALHGLSRALLQNMVDGVTRGFEKGLELVGVGYRAAKQGNKLVLSVGYSHPVEMVPGEGLEIEVPAPNKVIVKGIDKEAVGALAAKIRDVRPPEPYKGKGIKYEGEYIRRKVGKTGAKGGKK.

Belongs to the universal ribosomal protein uL6 family. As to quaternary structure, part of the 50S ribosomal subunit.

This protein binds to the 23S rRNA, and is important in its secondary structure. It is located near the subunit interface in the base of the L7/L12 stalk, and near the tRNA binding site of the peptidyltransferase center. This chain is Large ribosomal subunit protein uL6, found in Moorella thermoacetica (strain ATCC 39073 / JCM 9320).